The chain runs to 566 residues: Membrane protein insertase YidC (566 aa).

A helical transmembrane segment spans residues 7–27 (ILIVALAIVSYVMVLKWNQDY). A disordered region spans residues 38 to 72 (ASSTTAPGLPDAPTGTSAANDDIPRAASDTTAPAE). 5 helical membrane-spanning segments follow: residues 347-367 (LELT…FWLL), 373-393 (LVGN…GIFF), 443-463 (LGGC…YWVL), 474-494 (FMLW…PIIM), and 521-541 (PIIF…YWVV).

It belongs to the OXA1/ALB3/YidC family. Type 1 subfamily. In terms of assembly, interacts with the Sec translocase complex via SecD. Specifically interacts with transmembrane segments of nascent integral membrane proteins during membrane integration.

It is found in the cell inner membrane. Functionally, required for the insertion and/or proper folding and/or complex formation of integral membrane proteins into the membrane. Involved in integration of membrane proteins that insert both dependently and independently of the Sec translocase complex, as well as at least some lipoproteins. Aids folding of multispanning membrane proteins. The sequence is that of Membrane protein insertase YidC from Pseudomonas fluorescens (strain ATCC BAA-477 / NRRL B-23932 / Pf-5).